A 461-amino-acid chain; its full sequence is Putative forkhead-related transcription factor fkh-5 (461 aa).

Residues 171 to 262 (QRPQLSYQLL…VEKEMIDVKT (92 aa)) constitute a DNA-binding region (fork-head).

The protein resides in the nucleus. In terms of biological role, transcription factor. Binds to DNA sequence motif 5'-CTGTTTCA-3'. Regulates expression of a class of small RNAs, known as 21U-RNAs, perhaps acting redundantly with fkh-4 and fkh-3. The polypeptide is Putative forkhead-related transcription factor fkh-5 (fkh-5) (Caenorhabditis elegans).